Here is a 171-residue protein sequence, read N- to C-terminus: S-ribosylhomocysteine lyase (171 aa).

Fe cation contacts are provided by H54, H58, and C128.

Belongs to the LuxS family. In terms of assembly, homodimer. Fe cation is required as a cofactor.

The catalysed reaction is S-(5-deoxy-D-ribos-5-yl)-L-homocysteine = (S)-4,5-dihydroxypentane-2,3-dione + L-homocysteine. In terms of biological role, involved in the synthesis of autoinducer 2 (AI-2) which is secreted by bacteria and is used to communicate both the cell density and the metabolic potential of the environment. The regulation of gene expression in response to changes in cell density is called quorum sensing. Catalyzes the transformation of S-ribosylhomocysteine (RHC) to homocysteine (HC) and 4,5-dihydroxy-2,3-pentadione (DPD). In Yersinia enterocolitica serotype O:8 / biotype 1B (strain NCTC 13174 / 8081), this protein is S-ribosylhomocysteine lyase.